The primary structure comprises 209 residues: Putative 3-methyladenine DNA glycosylase (209 aa).

The protein belongs to the DNA glycosylase MPG family.

This is Putative 3-methyladenine DNA glycosylase from Deinococcus geothermalis (strain DSM 11300 / CIP 105573 / AG-3a).